A 358-amino-acid polypeptide reads, in one-letter code: Bis(monoacylglycero)phosphate synthase CLN5 (358 aa).

Positions 1 to 23 are disordered; that stretch reads MAQVGSAGPGACGRRGAGAGAGP. The Cytoplasmic portion of the chain corresponds to 1–29; the sequence is MAQVGSAGPGACGRRGAGAGAGPERTTWR. Residues 7–21 are compositionally biased toward gly residues; sequence AGPGACGRRGAGAGA. Residues 30–46 form a helical; Signal-anchor for type II membrane protein membrane-spanning segment; sequence WAPALLWLATAAAVAGD. Residues 47–358 are Lumenal-facing; that stretch reads PSRRQWPVPY…NRKNRTLSGL (312 aa). Disulfide bonds link C69–C158 and C76–C164. The active-site Proton acceptor is H116. 4 N-linked (GlcNAc...) asparagine glycosylation sites follow: N129, N142, N177, and N202. The active-site Nucleophile; Acyl-thioester intermediate is C230. N-linked (GlcNAc...) asparagine glycans are attached at residues N254, N270, and N280. A membrane-anchoring region spans residues 303-342; it reads FLLSLLQIFDAVVIHREFYLFYNFEYWFLPMKYPFIKITY. N352 carries N-linked (GlcNAc...) asparagine glycosylation.

This sequence belongs to the CLN5 family. In terms of assembly, multimer. Interacts with SORT1, RAB5A and RAB7A. Interacts with PPT1, TPP1, CLN3, CLN6, CLN8, ATP5F1A and ATP5F1B. In terms of processing, N-glycosylated with both high mannose and complex type sugars. Glycosylation is important for proper folding and trafficking to the lysosomes. The type II membrane signal anchor is proteolytically cleaved to produce a mature form that is transported to the lysosomes (Bis(monoacylglycero)phosphate synthase CLN5, secreted form). Post-translationally, can undergo proteolytic cleavage at the C-terminus, probably by a cysteine protease and may involve the removal of approximately 10-15 residues from the C-terminal end.

It localises to the lysosome. The protein resides in the membrane. The catalysed reaction is S-hexadecanoyl-L-cysteinyl-[protein] + H2O = L-cysteinyl-[protein] + hexadecanoate + H(+). It catalyses the reaction 2 1-acyl-sn-glycero-3-phospho-(1'-sn-glycerol) = 1-acyl-sn-glycero-3-phospho-(3'-acyl-sn-1'-glycerol) + sn-glycero-3-phospho-(1'-sn-glycerol). It carries out the reaction 2 1-(9Z-octadecenoyl)-sn-glycero-3-phospho-(1'-sn-glycerol) = 1-(9Z-octadecenoyl)-sn-glycero-3-phospho-(3'-(9Z-octadecenoyl)-1'-sn-glycerol) + sn-glycero-3-phospho-(1'-sn-glycerol). The enzyme catalyses 2 1-octadecanoyl-sn-glycero-3-phospho-(1'-sn-glycerol) = 1-octadecanoyl-sn-glycero-3-phospho-(3'-octadecanoyl-1'-sn-glycerol) + sn-glycero-3-phospho-(1'-sn-glycerol). The catalysed reaction is 2 1-hexadecanoyl-sn-glycero-3-phospho-(1'-sn-glycerol) = 1-hexadecanoyl-sn-glycero-3-phospho-(3'-hexadecanoyl-1'-sn-glycerol) + sn-glycero-3-phospho-(1'-sn-glycerol). It catalyses the reaction 2 1-tetradecanoyl-sn-glycero-3-phospho-(1'-sn-glycerol) = 1-tetradecanoyl-sn-glycero-3-phospho-(3'-tetradecanoyl-1'-sn-glycerol) + sn-glycero-3-phospho-(1'-sn-glycerol). Its function is as follows. Catalyzes the synthesis of bis(monoacylglycero)phosphate (BMP) via transacylation of 2 molecules of lysophosphatidylglycerol (LPG). BMP also known as lysobisphosphatidic acid plays a key role in the formation of intraluminal vesicles and in maintaining intracellular cholesterol homeostasis. Can use only LPG as the exclusive lysophospholipid acyl donor for base exchange and displays BMP synthase activity towards various LPGs (LPG 14:0, LPG 16:0, LPG 18:0, LPG 18:1) with a higher preference for longer chain lengths. Plays a role in influencing the retrograde trafficking of lysosomal sorting receptors SORT1 and IGF2R from the endosomes to the trans-Golgi network by controlling the recruitment of retromer complex to the endosomal membrane. Regulates the localization and activation of RAB7A which is required to recruit the retromer complex to the endosomal membrane. Exhibits palmitoyl protein thioesterase (S-depalmitoylation) activity in vitro and most likely plays a role in protein S-depalmitoylation. The chain is Bis(monoacylglycero)phosphate synthase CLN5 (CLN5) from Bos taurus (Bovine).